The following is a 162-amino-acid chain: Phospholipase A2 (162 aa).

Residues 1-22 form the signal peptide; that stretch reads MKVLQMFFCVILLCVTSVLVEA. A propeptide spanning residues 23–35 is cleaved from the precursor; the sequence is KSTTKGDETASKR. 6 cysteine pairs are disulfide-bonded: cysteine 60/cysteine 155, cysteine 62/cysteine 78, cysteine 77/cysteine 134, cysteine 84/cysteine 127, cysteine 94/cysteine 120, and cysteine 113/cysteine 125. The Ca(2+) site is built by tyrosine 61, glycine 63, and glycine 65. Residue histidine 81 is part of the active site. Aspartate 82 lines the Ca(2+) pocket. Aspartate 128 is an active-site residue.

The protein belongs to the phospholipase A2 family. Group I subfamily. D49 sub-subfamily. The cofactor is Ca(2+). Expressed both outside and in acontia, a specialised envenomation structure laden with batteries of venom-containing nematocysts found only in the superfamily Metridioidea.

It localises to the secreted. It is found in the nematocyst. It catalyses the reaction a 1,2-diacyl-sn-glycero-3-phosphocholine + H2O = a 1-acyl-sn-glycero-3-phosphocholine + a fatty acid + H(+). PLA2 catalyzes the calcium-dependent hydrolysis of the 2-acyl groups in 3-sn-phosphoglycerides. The chain is Phospholipase A2 from Calliactis polypus (Hermit crab anemone).